Consider the following 1053-residue polypeptide: DNA-directed RNA polymerase subunit beta' (1053 aa).

4 residues coordinate Zn(2+): cysteine 60, cysteine 62, cysteine 75, and cysteine 78. 3 residues coordinate Mg(2+): aspartate 449, aspartate 451, and aspartate 453. The Zn(2+) site is built by cysteine 818, cysteine 892, cysteine 899, and cysteine 902.

This sequence belongs to the RNA polymerase beta' chain family. As to quaternary structure, the RNAP catalytic core consists of 2 alpha, 1 beta, 1 beta' and 1 omega subunit. When a sigma factor is associated with the core the holoenzyme is formed, which can initiate transcription. Requires Mg(2+) as cofactor. Zn(2+) serves as cofactor.

The catalysed reaction is RNA(n) + a ribonucleoside 5'-triphosphate = RNA(n+1) + diphosphate. In terms of biological role, DNA-dependent RNA polymerase catalyzes the transcription of DNA into RNA using the four ribonucleoside triphosphates as substrates. The protein is DNA-directed RNA polymerase subunit beta' of Listeria grayi (Listeria murrayi).